Consider the following 373-residue polypeptide: Mannitol-1-phosphate 5-dehydrogenase (373 aa).

3–14 is an NAD(+) binding site; sequence ALHFGAGNIGRG.

The protein belongs to the mannitol dehydrogenase family.

The catalysed reaction is D-mannitol 1-phosphate + NAD(+) = beta-D-fructose 6-phosphate + NADH + H(+). The chain is Mannitol-1-phosphate 5-dehydrogenase from Bacillus pumilus (strain SAFR-032).